The chain runs to 742 residues: Envelope glycoprotein H (742 aa).

Residues 1–23 (MRPGLPSYLIILAVCLFSHLLSS) form the signal peptide. Residues 24 to 719 (RYGAEAVSEP…VVDATDSRLL (696 aa)) are Virion surface-facing. N-linked (GlcNAc...) asparagine; by host glycosylation is found at asparagine 55, asparagine 62, asparagine 67, and asparagine 192. An intrachain disulfide couples cysteine 195 to cysteine 211. Positions 217-280 (YLIDELRYVK…QTEKHELLVL (64 aa)) are interaction with gL. 3 cysteine pairs are disulfide-bonded: cysteine 330/cysteine 383, cysteine 495/cysteine 522, and cysteine 571/cysteine 624. 2 N-linked (GlcNAc...) asparagine; by host glycosylation sites follow: asparagine 641 and asparagine 700. The chain crosses the membrane as a helical span at residues 720–740 (MMSVYALSAIIGIYLLYRMLK). At 741 to 742 (TC) the chain is on the intravirion side.

It belongs to the herpesviridae glycoprotein H family. Interacts with glycoprotein L (gL); this interaction is necessary for the correct processing and cell surface expression of gH. The heterodimer gH/gL seems to interact with gB trimers during fusion. Forms the envelope pentamer complex (PC) composed of gH, gL, UL128, UL130, and UL131A. The pentamer interacts with host NRP2. Forms the envelope trimer complex composed of gH, gL, and gO. The trimer interacts with host PDGFRA. The trimer also interacts with host EPHA2. The trimer also interacts with host TGFBR3. Interacts with UL116. Post-translationally, N-glycosylated, O-glycosylated, and sialylated.

The protein localises to the virion membrane. It localises to the host cell membrane. It is found in the host endosome membrane. Functionally, the heterodimer glycoprotein H-glycoprotein L is required for the fusion of viral and plasma membranes leading to virus entry into the host cell. Following initial binding to host receptor, membrane fusion is mediated by the fusion machinery composed of gB and the heterodimer gH/gL. May also be involved in the fusion between the virion envelope and the outer nuclear membrane during virion morphogenesis. In human cytomegalovirus, forms two distincts complexes to mediate viral entry, a trimer and a pentamer at the surface of the virion envelope. The gH-gL-gO trimer is required for infection in fibroblasts by interacting with host PDGFRA, and in glioblastoma cells by interacting with host EPHA2. Thsi trimer may also be required in other cell types using host TGFBR3. The gH-gL-UL128-UL130-UL131A pentamer is essential for viral entry in epithelial, endothelial and myeloid cells via interaction with host NRP2. This chain is Envelope glycoprotein H, found in Human cytomegalovirus (strain Merlin) (HHV-5).